The sequence spans 787 residues: Protein translocase subunit SecA 2 (787 aa).

ATP is bound by residues Q86, 104-108, and D493; that span reads GEGKT.

Belongs to the SecA family. In terms of assembly, monomer and homodimer. Part of the essential Sec protein translocation apparatus which comprises SecA, SecYEG and auxiliary proteins SecDF. Other proteins may also be involved.

The protein localises to the cell membrane. Its subcellular location is the cytoplasm. It catalyses the reaction ATP + H2O + cellular proteinSide 1 = ADP + phosphate + cellular proteinSide 2.. Functionally, part of the Sec protein translocase complex. Interacts with the SecYEG preprotein conducting channel. Has a central role in coupling the hydrolysis of ATP to the transfer of proteins into and across the cell membrane, serving as an ATP-driven molecular motor driving the stepwise translocation of polypeptide chains across the membrane. In Bacillus thuringiensis subsp. konkukian (strain 97-27), this protein is Protein translocase subunit SecA 2.